A 1546-amino-acid chain; its full sequence is Mediator of RNA polymerase II transcription subunit 14 (1546 aa).

Short sequence motifs (LXXLL motif) lie at residues 51-55 (LAELL) and 468-472 (LPSLL). Disordered regions lie at residues 692–717 (KSAT…PSGS), 1000–1193 (GRAP…NRPW), and 1512–1546 (NPMM…GGPQ). Low complexity-rich tracts occupy residues 693-717 (SATA…PSGS), 1020-1035 (GGPS…GSSP), and 1061-1075 (PSSS…PHPS). Positions 1093-1102 (PPAPHMPHPS) are enriched in pro residues. A compositionally biased stretch (polar residues) spans 1125–1149 (GPNTLYMQSHQDSPFTAMSPANNQW). Pro residues predominate over residues 1153–1163 (PSMPRPSPRPG). Positions 1515–1527 (MPMQQLQPQVGPQ) are enriched in low complexity.

The protein belongs to the Mediator complex subunit 14 family. In terms of assembly, component of the Mediator complex.

It localises to the nucleus. Its function is as follows. Component of the Mediator complex, a coactivator involved in the regulated transcription of nearly all RNA polymerase II-dependent genes. Mediator functions as a bridge to convey information from gene-specific regulatory proteins to the basal RNA polymerase II transcription machinery. Mediator is recruited to promoters by direct interactions with regulatory proteins and serves as a scaffold for the assembly of a functional preinitiation complex with RNA polymerase II and the general transcription factors. This Drosophila pseudoobscura pseudoobscura (Fruit fly) protein is Mediator of RNA polymerase II transcription subunit 14 (MED14).